The chain runs to 354 residues: Soluble interferon alpha/beta receptor OPG204 (354 aa).

The signal sequence occupies residues 1 to 22 (MMKMTMKMMVHIYFVSLLLLLF). Ig-like C2-type domains lie at 68–150 (IGEP…RSHV) and 158–240 (PEIY…IVVS). 2 disulfides stabilise this stretch: Cys76-Cys132 and Cys175-Cys224. N-linked (GlcNAc...) asparagine; by host glycans are attached at residues Asn120, Asn124, Asn185, Asn272, and Asn324. The region spanning 249–348 (PSQDHRFKLI…HNYYFEKTLT (100 aa)) is the Ig-like V-type domain. A disulfide bridge connects residues Cys275 and Cys336.

The protein belongs to the interleukin-1 receptor family. As to quaternary structure, interacts with host IFNA1.

The protein resides in the secreted. Its function is as follows. Counteracts the antiviral effects of host IFN-alpha/beta and key IFN-inducible proteins involved in viral RNA degradation suxh as host OAS1. Acts as a soluble IFN-alpha receptor and thus inhibits the interaction between host IFN-alpha and its receptor. This is Soluble interferon alpha/beta receptor OPG204 (OPG204) from Homo sapiens (Human).